Reading from the N-terminus, the 854-residue chain is Disrupted in schizophrenia 1 protein (854 aa).

Positions 1–18 are enriched in gly residues; that stretch reads MPGGGPQGAPAAAGGGGV. 4 disordered regions span residues 1–24, 179–205, 221–257, and 278–323; these read MPGG…RAGS, SAEL…SHSA, GERG…GPHE, and AQAA…SGDA. The tract at residues 1–292 is interaction with MAP1A; it reads MPGGGPQGAP…NSSRPERDMH (292 aa). The Interaction with FBXW7 motif lies at 197–203; it reads PTPPGSH. Over residues 285 to 295 the composition is skewed to basic and acidic residues; sequence SRPERDMHSLP. The interval 293-696 is interaction with TRAF3IP1; the sequence is SLPDMDPGSS…LGKVWEADLE (404 aa). Positions 296-309 are enriched in low complexity; sequence DMDPGSSSSLDPSL. 3 coiled-coil regions span residues 366-394, 452-505, and 602-666; these read ENDD…HFQL, ITRR…CDLT, and WTAK…SVKE. Residue lysine 372 forms a Glycyl lysine isopeptide (Lys-Gly) (interchain with G-Cter in ubiquitin) linkage. Positions 440–597 are required for localization to punctate cytoplasmic foci; it reads LEPTAQDSLH…LLEAKMHAIS (158 aa). A necessary and sufficient for interaction with PCNT and localization at the centrosome region spans residues 446 to 854; the sequence is DSLHVSITRR…MTAGVHEAQA (409 aa). Residues 598 to 854 form an interaction with ATF4 and ATF5 region; the sequence is GNHFWTAKDL…MTAGVHEAQA (257 aa). Residues 716 to 739 form a disordered region; that stretch reads VEDERQMDDLEGAAPPIPPRLHSE. The interval 727–854 is interaction with PAFAH1B1; it reads GAAPPIPPRL…MTAGVHEAQA (128 aa). Positions 802–830 form a coiled coil; that stretch reads SHDEDLIQSLRRELQMVKETLQAMILQLQ. An interaction with NDEL1 region spans residues 802–835; the sequence is SHDEDLIQSLRRELQMVKETLQAMILQLQPAKEA.

Interacts with NDEL1. Interacts with CCDC88A (via C-terminus); the interaction is direct. Interacts with GSK3B. Interacts with tubulin alpha, ACTN2, ANKHD1, ATF4, ATF5, CEP63, EIF3S3, MAP1A, NDEL1, PAFAH1B1, RANBP9, SPTBN4, SYNE1 and TRAF3IP1. Interaction with microtubules may be mediated in part by TRAF3IP1. Interacts (via C-terminal) with PCNT. Interacts with CHCHD6. Interacts with CCDC141. Interacts with FBXW7, the substrate-recognition component of a SCF (SKP1-CUL1-F-box protein) E3 ubiquitin-protein ligase complex; the interaction targets DISC1 for proteasomal degradation. Interacts with ZNF365. Interacts with ATF4; inhibiting ATF4 transcription factor activity by disrupting ATF4 dimerization and DNA-binding. Interacts with PDE4B (isoform PDE4B5). In terms of processing, ubiquitinated. Ubiquitination with 'Lys-48'-linked polyubiquitin chains leads to its proteasomal degradation. As to expression, ubiquitous. Highly expressed in the dentate gyrus of the hippocampus. Also expressed in the temporal and parahippocampal cortices and cells of the white matter.

It localises to the cytoplasm. It is found in the cytoskeleton. The protein resides in the mitochondrion. The protein localises to the microtubule organizing center. Its subcellular location is the centrosome. It localises to the postsynaptic density. Involved in the regulation of multiple aspects of embryonic and adult neurogenesis. Required for neural progenitor proliferation in the ventrical/subventrical zone during embryonic brain development and in the adult dentate gyrus of the hippocampus. Participates in the Wnt-mediated neural progenitor proliferation as a positive regulator by modulating GSK3B activity and CTNNB1 abundance. Plays a role as a modulator of the AKT-mTOR signaling pathway controlling the tempo of the process of newborn neurons integration during adult neurogenesis, including neuron positioning, dendritic development and synapse formation. Inhibits the activation of AKT-mTOR signaling upon interaction with CCDC88A. Regulates the migration of early-born granule cell precursors toward the dentate gyrus during the hippocampal development. Inhibits ATF4 transcription factor activity in neurons by disrupting ATF4 dimerization and DNA-binding. Plays a role, together with PCNT, in the microtubule network formation. This chain is Disrupted in schizophrenia 1 protein, found in Homo sapiens (Human).